Here is a 142-residue protein sequence, read N- to C-terminus: Large ribosomal subunit protein uL11 (142 aa).

It belongs to the universal ribosomal protein uL11 family. Part of the ribosomal stalk of the 50S ribosomal subunit. Interacts with L10 and the large rRNA to form the base of the stalk. L10 forms an elongated spine to which L12 dimers bind in a sequential fashion forming a multimeric L10(L12)X complex. In terms of processing, one or more lysine residues are methylated.

Functionally, forms part of the ribosomal stalk which helps the ribosome interact with GTP-bound translation factors. The sequence is that of Large ribosomal subunit protein uL11 from Mycobacterium sp. (strain JLS).